We begin with the raw amino-acid sequence, 90 residues long: Small ribosomal subunit protein bS20 (90 aa).

The segment at 1–25 is disordered; that stretch reads MANSAQARKRARQAAKANSHNSALR.

Belongs to the bacterial ribosomal protein bS20 family.

Functionally, binds directly to 16S ribosomal RNA. This Burkholderia orbicola (strain MC0-3) protein is Small ribosomal subunit protein bS20.